A 73-amino-acid polypeptide reads, in one-letter code: Small, acid-soluble spore protein C2 (73 aa).

Belongs to the alpha/beta-type SASP family.

In terms of biological role, SASP are bound to spore DNA. They are double-stranded DNA-binding proteins that cause DNA to change to an a-like conformation. They protect the DNA backbone from chemical and enzymatic cleavage and are thus involved in dormant spore's high resistance to UV light. This is Small, acid-soluble spore protein C2 (SASP-C2) from Priestia megaterium (Bacillus megaterium).